Here is a 583-residue protein sequence, read N- to C-terminus: Radixin (583 aa).

The FERM domain occupies 5-295 (INVRVTTMDA…GNHELYMRRR (291 aa)). 60-63 (KLNK) is a binding site for a 1,2-diacyl-sn-glycero-3-phospho-(1D-myo-inositol). Position 83 is an N6-succinyllysine (Lys83). A 1,2-diacyl-sn-glycero-3-phospho-(1D-myo-inositol) is bound at residue Lys278. 3 disordered regions span residues 309–336 (AREE…AEKE), 374–407 (ELDQ…AKQA), and 460–526 (KEEL…RVKK). Over residues 374 to 400 (ELDQERKRAKEEAERLEKERQAAEEAK) the composition is skewed to basic and acidic residues. Pro residues predominate over residues 469 to 480 (APPPPPPPPVIP). Composition is skewed to basic and acidic residues over residues 483–492 (ENEHDEHDEN) and 506–525 (MNHR…ERVK). The residue at position 564 (Thr564) is a Phosphothreonine; by ROCK2.

Interacts with CPNE1 (via VWFA domain) and CPNE4 (via VWFA domain). Binds NHERF1. Interacts with NHERF1, NHERF2, LAYN, MME/NEP and ICAM2. Interacts (via FERM domain) with SPN/CD43 cytoplasmic tail. Interacts with CD44. Interacts with CLIC5; may work together in a complex which also includes EZR and MYO6 to stabilize linkages between the plasma membrane and subjacent actin cytoskeleton at the base of stereocilia. In terms of processing, phosphorylated by tyrosine-protein kinases. Phosphorylation by ROCK2 suppresses the head-to-tail association of the N-terminal and C-terminal halves resulting in an opened conformation which is capable of actin and membrane-binding.

Its subcellular location is the cell membrane. It is found in the cytoplasm. The protein resides in the cytoskeleton. It localises to the cleavage furrow. The protein localises to the cell projection. Its subcellular location is the microvillus. It is found in the stereocilium. A head-to-tail association, of the N-terminal and C-terminal halves results in a closed conformation (inactive form) which is incapable of actin or membrane-binding. Probably plays a crucial role in the binding of the barbed end of actin filaments to the plasma membrane. The polypeptide is Radixin (RDX) (Bos taurus (Bovine)).